Reading from the N-terminus, the 513-residue chain is Calcium-dependent protein kinase 24 (513 aa).

A disordered region spans residues 1 to 33 (MQPDPSGSGGDGNANAKAKLAPPPVTAAGGRPV). In terms of domain architecture, Protein kinase spans 47 to 305 (YRIGKKLGQG…AHEVLCHPWI (259 aa)). Residues 53-61 (LGQGQFGTT) and Lys-76 each bind ATP. Asp-171 acts as the Proton acceptor in catalysis. Residues 311 to 341 (APDKPIDSAVLSRLKHFSAMNKLKKMALRVI) form an autoinhibitory domain region. EF-hand domains lie at 348-383 (EEIG…VGSE), 384-419 (LTEH…MNKL), 420-455 (EREE…FGLD), and 458-489 (HLED…GNAG). Ca(2+)-binding residues include Asp-361, Asp-363, Ser-365, Thr-367, Glu-372, Asp-397, Asp-399, Ser-401, Thr-403, Glu-408, Asp-433, Asp-435, Ser-437, Glu-444, Asp-467, Asn-469, Asp-471, Gln-473, and Glu-478.

It belongs to the protein kinase superfamily. Ser/Thr protein kinase family. CDPK subfamily. Expressed in roots.

The protein resides in the cytoplasm. It catalyses the reaction L-seryl-[protein] + ATP = O-phospho-L-seryl-[protein] + ADP + H(+). The catalysed reaction is L-threonyl-[protein] + ATP = O-phospho-L-threonyl-[protein] + ADP + H(+). With respect to regulation, activated by calcium. Autophosphorylation may play an important role in the regulation of the kinase activity. In terms of biological role, may play a role in signal transduction pathways that involve calcium as a second messenger. Possesses calcium-dependent protein kinase activity in vitro. The polypeptide is Calcium-dependent protein kinase 24 (Oryza sativa subsp. japonica (Rice)).